Reading from the N-terminus, the 526-residue chain is Secreted triacylglycerol lipase LIP4 (526 aa).

The first 26 residues, 1 to 26 (MVRLSYVRFGVAWCIAIIIVSGFSNA), serve as a signal peptide directing secretion. An N-linked (GlcNAc...) asparagine glycan is attached at asparagine 186. Serine 195 acts as the Nucleophile in catalysis. Asparagine 228 is a glycosylation site (N-linked (GlcNAc...) asparagine). Active-site residues include aspartate 342 and histidine 376. Residue asparagine 377 is glycosylated (N-linked (GlcNAc...) asparagine). The tract at residues 412-526 (TGPSASSSAG…TMPAPPLMER (115 aa)) is disordered. Composition is skewed to low complexity over residues 413 to 423 (GPSASSSAGGP) and 430 to 457 (TGGH…HAPA). N-linked (GlcNAc...) asparagine glycosylation is present at asparagine 462. Positions 480–490 (PSTGATSPAPS) are enriched in low complexity. The segment covering 516-526 (RTMPAPPLMER) has biased composition (pro residues).

This sequence belongs to the AB hydrolase superfamily. Lipase family. Class Lip subfamily.

It localises to the secreted. It carries out the reaction a triacylglycerol + H2O = a diacylglycerol + a fatty acid + H(+). It catalyses the reaction a monoacylglycerol + H2O = glycerol + a fatty acid + H(+). The enzyme catalyses a diacylglycerol + H2O = a monoacylglycerol + a fatty acid + H(+). Secreted lipase that hydrolyzes acylglycerol lipids such as triacylglycerols and consequently releases free fatty acid. Can hydrolyze 4-nitrophenyl palmitate to release 4-nitrophenol and palmitoic acid. Due to an absence of fatty acid synthase genes in Malassezia species, secretory lipases are essential for the yeast to generate free fatty acids from degradation of sebum and assimilate them as lipid sources for growth. Plays important roles not only in lipid metabolism but also in the immune response of host cells and pathogenesis. This is Secreted triacylglycerol lipase LIP4 from Malassezia furfur (Pityriasis versicolor infection agent).